Reading from the N-terminus, the 219-residue chain is Ribose-5-phosphate isomerase A (219 aa).

Substrate contacts are provided by residues 28-31 (TGST), 81-84 (DGAD), and 94-97 (KGGG). The active-site Proton acceptor is the Glu103. Residue Lys121 coordinates substrate.

Belongs to the ribose 5-phosphate isomerase family. As to quaternary structure, homodimer.

It carries out the reaction aldehydo-D-ribose 5-phosphate = D-ribulose 5-phosphate. It functions in the pathway carbohydrate degradation; pentose phosphate pathway; D-ribose 5-phosphate from D-ribulose 5-phosphate (non-oxidative stage): step 1/1. In terms of biological role, catalyzes the reversible conversion of ribose-5-phosphate to ribulose 5-phosphate. In Pectobacterium atrosepticum (strain SCRI 1043 / ATCC BAA-672) (Erwinia carotovora subsp. atroseptica), this protein is Ribose-5-phosphate isomerase A.